The primary structure comprises 482 residues: UDP-N-acetylmuramate--L-alanine ligase (482 aa).

123 to 129 (GTHGKTT) lines the ATP pocket.

Belongs to the MurCDEF family.

It is found in the cytoplasm. It catalyses the reaction UDP-N-acetyl-alpha-D-muramate + L-alanine + ATP = UDP-N-acetyl-alpha-D-muramoyl-L-alanine + ADP + phosphate + H(+). Its pathway is cell wall biogenesis; peptidoglycan biosynthesis. Its function is as follows. Cell wall formation. This chain is UDP-N-acetylmuramate--L-alanine ligase, found in Pseudomonas putida (strain ATCC 47054 / DSM 6125 / CFBP 8728 / NCIMB 11950 / KT2440).